A 628-amino-acid polypeptide reads, in one-letter code: Biosynthetic arginine decarboxylase (628 aa).

K101 is subject to N6-(pyridoxal phosphate)lysine. Residue 281 to 291 (VDVGGGLGVDY) coordinates substrate.

The protein belongs to the Orn/Lys/Arg decarboxylase class-II family. SpeA subfamily. The cofactor is Mg(2+). It depends on pyridoxal 5'-phosphate as a cofactor.

The enzyme catalyses L-arginine + H(+) = agmatine + CO2. The protein operates within amine and polyamine biosynthesis; agmatine biosynthesis; agmatine from L-arginine: step 1/1. Functionally, catalyzes the biosynthesis of agmatine from arginine. The chain is Biosynthetic arginine decarboxylase from Alkalilimnicola ehrlichii (strain ATCC BAA-1101 / DSM 17681 / MLHE-1).